Consider the following 275-residue polypeptide: Large ribosomal subunit protein uL2 (275 aa).

A compositionally biased stretch (polar residues) spans 36-49; it reads TQSSTAGRNNNGRI. 2 disordered regions span residues 36–59 and 224–275; these read TQSS…GGHK and AMNP…RHKR. Residues 50–59 show a composition bias toward basic residues; the sequence is TTRHKGGGHK.

The protein belongs to the universal ribosomal protein uL2 family. Part of the 50S ribosomal subunit. Forms a bridge to the 30S subunit in the 70S ribosome.

One of the primary rRNA binding proteins. Required for association of the 30S and 50S subunits to form the 70S ribosome, for tRNA binding and peptide bond formation. It has been suggested to have peptidyltransferase activity; this is somewhat controversial. Makes several contacts with the 16S rRNA in the 70S ribosome. The polypeptide is Large ribosomal subunit protein uL2 (Burkholderia vietnamiensis (strain G4 / LMG 22486) (Burkholderia cepacia (strain R1808))).